The following is a 273-amino-acid chain: Phycocyanobilin lyase subunit alpha (273 aa).

The protein belongs to the CpcE/RpcE/PecE family. As to quaternary structure, cpcE and CpcF associate to form a lyase.

Functionally, required for the chromophorylation of the cpcA gene product. This is Phycocyanobilin lyase subunit alpha (cpcE) from Synechococcus elongatus (strain ATCC 33912 / PCC 7942 / FACHB-805) (Anacystis nidulans R2).